The following is a 460-amino-acid chain: Decaprenylphosphoryl-beta-D-ribose oxidase (460 aa).

Positions 19–193 (TAPTVASVLS…LRATIEMTPT (175 aa)) constitute an FAD-binding PCMH-type domain. FAD contacts are provided by residues 52 to 62 (ARGLGRSYGDN), Gly116, 121 to 124 (TVGG), 128 to 131 (CDIH), Ile183, and Tyr414.

Belongs to the DprE1 family. As to quaternary structure, monomer. Interacts with DprE2 to form an epimerase complex.

It is found in the periplasm. It catalyses the reaction trans,octa-cis-decaprenylphospho-beta-D-ribofuranose + FAD + H(+) = trans,octa-cis-decaprenylphospho-beta-D-erythro-pentofuranosid-2-ulose + FADH2. It functions in the pathway cell wall biogenesis; cell wall polysaccharide biosynthesis. With respect to regulation, is inhibited by 8-nitro-benzothiazinones (BTZs) such as BTZ043; BTZs are a new class of antimycobacterial agents that block formation of both cell-wall lipoarabinomannan and arabinogalactan via inhibition of decaprenyl-phospho-arabinose (DPA) synthesis. BTZs are suicide inhibitors that act via covalent modification of DprE1; the essential nitro group of these compounds is reduced by DprE1 to a nitroso group, which then specifically reacts with Cys-386 of DprE1 to form an irreversible semimercaptal adduct. Other compounds with diverse scaffolds (dinitrobenzamides and nitrobenzoquinoxalines) also act as covalent DprE1 inhibitors. Functionally, component of the DprE1-DprE2 complex that catalyzes the 2-step epimerization of decaprenyl-phospho-ribose (DPR) to decaprenyl-phospho-arabinose (DPA), a key precursor that serves as the arabinose donor required for the synthesis of cell-wall arabinans. DprE1 catalyzes the first step of epimerization, namely FAD-dependent oxidation of the C2' hydroxyl of DPR to yield the keto intermediate decaprenyl-phospho-2'-keto-D-arabinose (DPX). The intermediate DPX is then transferred to DprE2 subunit of the epimerase complex, most probably through a 'substrate channel' at the interface of DprE1-DprE2 complex. Can also use farnesyl-phosphoryl-beta-D-ribofuranose (FPR) as substrate in vitro. Appears to be essential for the growth of M.smegmatis. The chain is Decaprenylphosphoryl-beta-D-ribose oxidase from Mycolicibacterium smegmatis (strain ATCC 700084 / mc(2)155) (Mycobacterium smegmatis).